Consider the following 805-residue polypeptide: Cell division cycle protein 48 homolog (805 aa).

Residues 249-256 and 522-529 contribute to the ATP site; these read GPPGSGKT and GPPGCGKT. The disordered stretch occupies residues 783–805; it reads GATAAADPFATSNAAADDDDLYS.

It belongs to the AAA ATPase family.

Its function is as follows. Probably functions in cell division and growth processes. The protein is Cell division cycle protein 48 homolog (CAFP) of Capsicum annuum (Capsicum pepper).